A 339-amino-acid polypeptide reads, in one-letter code: Aspartate carbamoyltransferase catalytic subunit (339 aa).

Carbamoyl phosphate-binding residues include Arg-60 and Thr-61. Lys-88 is a binding site for L-aspartate. Residues Arg-110, His-143, and Gln-146 each coordinate carbamoyl phosphate. L-aspartate contacts are provided by Arg-183 and Arg-254. The carbamoyl phosphate site is built by Gly-295 and Pro-296.

This sequence belongs to the aspartate/ornithine carbamoyltransferase superfamily. ATCase family. Heterododecamer (2C3:3R2) of six catalytic PyrB chains organized as two trimers (C3), and six regulatory PyrI chains organized as three dimers (R2).

The enzyme catalyses carbamoyl phosphate + L-aspartate = N-carbamoyl-L-aspartate + phosphate + H(+). It functions in the pathway pyrimidine metabolism; UMP biosynthesis via de novo pathway; (S)-dihydroorotate from bicarbonate: step 2/3. Functionally, catalyzes the condensation of carbamoyl phosphate and aspartate to form carbamoyl aspartate and inorganic phosphate, the committed step in the de novo pyrimidine nucleotide biosynthesis pathway. The protein is Aspartate carbamoyltransferase catalytic subunit of Prochlorococcus marinus (strain MIT 9312).